The chain runs to 410 residues: Serine hydroxymethyltransferase (410 aa).

Residues Leu-116 and 120–122 each bind (6S)-5,6,7,8-tetrahydrofolate; that span reads GHL. Lys-225 carries the post-translational modification N6-(pyridoxal phosphate)lysine. 349–351 contributes to the (6S)-5,6,7,8-tetrahydrofolate binding site; sequence SPF.

It belongs to the SHMT family. As to quaternary structure, homodimer. The cofactor is pyridoxal 5'-phosphate.

The protein resides in the cytoplasm. It carries out the reaction (6R)-5,10-methylene-5,6,7,8-tetrahydrofolate + glycine + H2O = (6S)-5,6,7,8-tetrahydrofolate + L-serine. It functions in the pathway one-carbon metabolism; tetrahydrofolate interconversion. Its pathway is amino-acid biosynthesis; glycine biosynthesis; glycine from L-serine: step 1/1. Its function is as follows. Catalyzes the reversible interconversion of serine and glycine with tetrahydrofolate (THF) serving as the one-carbon carrier. This reaction serves as the major source of one-carbon groups required for the biosynthesis of purines, thymidylate, methionine, and other important biomolecules. Also exhibits THF-independent aldolase activity toward beta-hydroxyamino acids, producing glycine and aldehydes, via a retro-aldol mechanism. This chain is Serine hydroxymethyltransferase, found in Leuconostoc mesenteroides subsp. mesenteroides (strain ATCC 8293 / DSM 20343 / BCRC 11652 / CCM 1803 / JCM 6124 / NCDO 523 / NBRC 100496 / NCIMB 8023 / NCTC 12954 / NRRL B-1118 / 37Y).